The following is a 268-amino-acid chain: Indole-3-glycerol phosphate synthase (268 aa).

It belongs to the TrpC family.

The enzyme catalyses 1-(2-carboxyphenylamino)-1-deoxy-D-ribulose 5-phosphate + H(+) = (1S,2R)-1-C-(indol-3-yl)glycerol 3-phosphate + CO2 + H2O. The protein operates within amino-acid biosynthesis; L-tryptophan biosynthesis; L-tryptophan from chorismate: step 4/5. The chain is Indole-3-glycerol phosphate synthase (trpC) from Acinetobacter baylyi (strain ATCC 33305 / BD413 / ADP1).